A 396-amino-acid chain; its full sequence is Acetate kinase (396 aa).

Residue N8 participates in Mg(2+) binding. K15 serves as a coordination point for ATP. R89 serves as a coordination point for substrate. The Proton donor/acceptor role is filled by D146. Residues H206–G210, D283–R285, and G331–N335 each bind ATP. E383 contacts Mg(2+).

This sequence belongs to the acetokinase family. As to quaternary structure, homodimer. Requires Mg(2+) as cofactor. Mn(2+) serves as cofactor.

It localises to the cytoplasm. It catalyses the reaction acetate + ATP = acetyl phosphate + ADP. The protein operates within metabolic intermediate biosynthesis; acetyl-CoA biosynthesis; acetyl-CoA from acetate: step 1/2. Functionally, catalyzes the formation of acetyl phosphate from acetate and ATP. Can also catalyze the reverse reaction. The protein is Acetate kinase of Streptococcus uberis (strain ATCC BAA-854 / 0140J).